Consider the following 250-residue polypeptide: Probable transcriptional regulatory protein Mmc1_0479 (250 aa).

The protein belongs to the TACO1 family.

Its subcellular location is the cytoplasm. In Magnetococcus marinus (strain ATCC BAA-1437 / JCM 17883 / MC-1), this protein is Probable transcriptional regulatory protein Mmc1_0479.